We begin with the raw amino-acid sequence, 264 residues long: 3-methyl-2-oxobutanoate hydroxymethyltransferase (264 aa).

2 residues coordinate Mg(2+): Asp45 and Asp84. 3-methyl-2-oxobutanoate contacts are provided by residues 45-46 (DS), Asp84, and Lys112. Glu114 provides a ligand contact to Mg(2+). Glu181 acts as the Proton acceptor in catalysis.

The protein belongs to the PanB family. In terms of assembly, homodecamer; pentamer of dimers. Mg(2+) is required as a cofactor.

The protein resides in the cytoplasm. The catalysed reaction is 3-methyl-2-oxobutanoate + (6R)-5,10-methylene-5,6,7,8-tetrahydrofolate + H2O = 2-dehydropantoate + (6S)-5,6,7,8-tetrahydrofolate. Its pathway is cofactor biosynthesis; (R)-pantothenate biosynthesis; (R)-pantoate from 3-methyl-2-oxobutanoate: step 1/2. Its function is as follows. Catalyzes the reversible reaction in which hydroxymethyl group from 5,10-methylenetetrahydrofolate is transferred onto alpha-ketoisovalerate to form ketopantoate. This Vibrio vulnificus (strain YJ016) protein is 3-methyl-2-oxobutanoate hydroxymethyltransferase.